A 316-amino-acid chain; its full sequence is Thymidylate synthase (316 aa).

Residues Arg-23 and 178 to 179 contribute to the dUMP site; that span reads RR. The Nucleophile role is filled by Cys-198. Residues 218-221, Asn-229, and 259-261 contribute to the dUMP site; these read RSAD and HLY. Residue Asp-221 coordinates (6R)-5,10-methylene-5,6,7,8-tetrahydrofolate. Ala-315 is a (6R)-5,10-methylene-5,6,7,8-tetrahydrofolate binding site.

Belongs to the thymidylate synthase family. Bacterial-type ThyA subfamily. In terms of assembly, homodimer.

It localises to the cytoplasm. It carries out the reaction dUMP + (6R)-5,10-methylene-5,6,7,8-tetrahydrofolate = 7,8-dihydrofolate + dTMP. Its pathway is pyrimidine metabolism; dTTP biosynthesis. Its function is as follows. Catalyzes the reductive methylation of 2'-deoxyuridine-5'-monophosphate (dUMP) to 2'-deoxythymidine-5'-monophosphate (dTMP) while utilizing 5,10-methylenetetrahydrofolate (mTHF) as the methyl donor and reductant in the reaction, yielding dihydrofolate (DHF) as a by-product. This enzymatic reaction provides an intracellular de novo source of dTMP, an essential precursor for DNA biosynthesis. The sequence is that of Thymidylate synthase from Lacticaseibacillus casei (Lactobacillus casei).